We begin with the raw amino-acid sequence, 545 residues long: Sphingomyelin phosphodiesterase 5 (545 aa).

Residues 1-35 (MSLRESPFPNGFLEGLHAVGWGLIFPCFWFLDRLI) constitute a mitochondrion transit peptide. Over 36–64 (AVCISTTLERMWRLEQECYLHPLKVVFGS) the chain is Mitochondrial matrix. The chain crosses the membrane as a helical; Signal-anchor for type II membrane protein span at residues 65-85 (ILFFILFVISTPFALLGFILW). Over 86–545 (APLQAIRRPF…LSVSLDSEQN (460 aa)) the chain is Mitochondrial intermembrane. Residue E258 participates in Mg(2+) binding. Catalysis depends on H529, which acts as the Proton acceptor.

The protein belongs to the neutral sphingomyelinase family. Requires Mg(2+) as cofactor. It depends on Mn(2+) as a cofactor.

The protein localises to the mitochondrion inner membrane. It is found in the endoplasmic reticulum membrane. The catalysed reaction is a sphingomyelin + H2O = phosphocholine + an N-acylsphing-4-enine + H(+). The enzyme catalyses N-(hexadecanoyl)-sphing-4-enine-1-phosphocholine + H2O = N-hexadecanoylsphing-4-enine + phosphocholine + H(+). It participates in lipid metabolism; sphingolipid metabolism. Activated by the phospholipids cardiolipin, phosphatidylserine, and phosphatidylethanolamine. Strongest activation with cardiolipin. Its function is as follows. Catalyzes the hydrolysis of membrane sphingomyelin to form phosphorylcholine and ceramide. In Danio rerio (Zebrafish), this protein is Sphingomyelin phosphodiesterase 5.